Here is an 88-residue protein sequence, read N- to C-terminus: Small ribosomal subunit protein uS17 (88 aa).

The protein belongs to the universal ribosomal protein uS17 family. In terms of assembly, part of the 30S ribosomal subunit.

Functionally, one of the primary rRNA binding proteins, it binds specifically to the 5'-end of 16S ribosomal RNA. The chain is Small ribosomal subunit protein uS17 from Pseudomonas savastanoi pv. phaseolicola (strain 1448A / Race 6) (Pseudomonas syringae pv. phaseolicola (strain 1448A / Race 6)).